A 478-amino-acid polypeptide reads, in one-letter code: Probable serine carboxypeptidase CPVL (478 aa).

Positions 1–22 (MVRAQWKVIILLILLMVIPSDG) are cleaved as a signal peptide. N-linked (GlcNAc...) asparagine glycosylation is found at N83 and N134. S206 is an active-site residue. 2 N-linked (GlcNAc...) asparagine glycosylation sites follow: N309 and N350. Catalysis depends on residues D390 and H450.

It belongs to the peptidase S10 family.

Functionally, may be involved in the digestion of phagocytosed particles in the lysosome, participation in an inflammatory protease cascade, and trimming of peptides for antigen presentation. This is Probable serine carboxypeptidase CPVL (CPVL) from Rattus norvegicus (Rat).